We begin with the raw amino-acid sequence, 239 residues long: Phosphoribosylaminoimidazole-succinocarboxamide synthase (239 aa).

It belongs to the SAICAR synthetase family.

The catalysed reaction is 5-amino-1-(5-phospho-D-ribosyl)imidazole-4-carboxylate + L-aspartate + ATP = (2S)-2-[5-amino-1-(5-phospho-beta-D-ribosyl)imidazole-4-carboxamido]succinate + ADP + phosphate + 2 H(+). It participates in purine metabolism; IMP biosynthesis via de novo pathway; 5-amino-1-(5-phospho-D-ribosyl)imidazole-4-carboxamide from 5-amino-1-(5-phospho-D-ribosyl)imidazole-4-carboxylate: step 1/2. This is Phosphoribosylaminoimidazole-succinocarboxamide synthase from Bacillus mycoides (strain KBAB4) (Bacillus weihenstephanensis).